Reading from the N-terminus, the 231-residue chain is PX domain-containing protein 1 (231 aa).

The 134-residue stretch at 1-134 (MASAVFEGTS…TFFERSPLDQ (134 aa)) folds into the PX domain.

This Bos taurus (Bovine) protein is PX domain-containing protein 1 (PXDC1).